The primary structure comprises 508 residues: Photosystem II CP47 reaction center protein (508 aa).

6 helical membrane-spanning segments follow: residues 21–36, 101–115, 140–156, 203–218, 237–252, and 457–472; these read SVHIMHTALVAGWAGS, IVFSGLCFLAAIWHW, GIHLFLSGVACFGFGAF, IAAGILGILAGLFHLS, VLSSSIAAVFFAAFIV, and TFALLFFSGHIWHGAR.

It belongs to the PsbB/PsbC family. PsbB subfamily. As to quaternary structure, PSII is composed of 1 copy each of membrane proteins PsbA, PsbB, PsbC, PsbD, PsbE, PsbF, PsbH, PsbI, PsbJ, PsbK, PsbL, PsbM, PsbT, PsbX, PsbY, PsbZ, Psb30/Ycf12, at least 3 peripheral proteins of the oxygen-evolving complex and a large number of cofactors. It forms dimeric complexes. Requires Binds multiple chlorophylls. PSII binds additional chlorophylls, carotenoids and specific lipids. as cofactor.

Its subcellular location is the plastid. The protein localises to the chloroplast thylakoid membrane. In terms of biological role, one of the components of the core complex of photosystem II (PSII). It binds chlorophyll and helps catalyze the primary light-induced photochemical processes of PSII. PSII is a light-driven water:plastoquinone oxidoreductase, using light energy to abstract electrons from H(2)O, generating O(2) and a proton gradient subsequently used for ATP formation. This chain is Photosystem II CP47 reaction center protein, found in Pinus thunbergii (Japanese black pine).